Consider the following 270-residue polypeptide: Centromere protein Q (270 aa).

Residues 1–59 form a disordered region; it reads MSGKANTSKKKSQRVKRNVKQRADKEDEELDSPENKVGNRAKRNRSHAGHLSSKEQTKC. Basic residues-rich tracts occupy residues 7 to 20 and 39 to 48; these read TSKK…RNVK and NRAKRNRSHA. Ser52 is subject to Phosphoserine. Positions 143–205 form a coiled coil; sequence LKVEREQERA…EEEMKEVFHI (63 aa).

It belongs to the CENP-Q/OKP1 family. Component of the CENPA-CAD complex, composed of CENPI, CENPK, CENPL, CENPO, CENPP, CENPQ, CENPR and CENPS. The CENPA-CAD complex interacts with the CENPA-NAC complex, at least composed of CENPA, CENPC, CENPH, CENPM, CENPN, CENPT and CENPU. Phosphorylation at Ser-52 is essential for CENPE recruitment to kinetochores and orderly chromosome congression.

It is found in the nucleus. The protein resides in the chromosome. The protein localises to the centromere. Component of the CENPA-CAD (nucleosome distal) complex, a complex recruited to centromeres which is involved in assembly of kinetochore proteins, mitotic progression and chromosome segregation. May be involved in incorporation of newly synthesized CENPA into centromeres via its interaction with the CENPA-NAC complex. Plays an important role in chromosome congression and in the recruitment of CENP-O complex (which comprises CENPO, CENPP, CENPQ and CENPU), CENPE and PLK1 to the kinetochores. The protein is Centromere protein Q (Cenpq) of Rattus norvegicus (Rat).